The following is a 173-amino-acid chain: Mitochondrial import inner membrane translocase subunit TIM22-1 (173 aa).

The N-terminal 18 residues, 1-18, are a transit peptide targeting the mitochondrion; it reads MADSSAAEPTTGASSPPV. The segment at 1 to 26 is disordered; sequence MADSSAAEPTTGASSPPVASDENSTQ. 4 helical membrane passes run 52-72, 101-119, 128-144, and 151-168; these read VTSG…LGAL, SCKT…ECIV, TVNT…SMSA, and ACIG…IEKF.

It belongs to the Tim17/Tim22/Tim23 family. As to expression, expressed in young cotyledons, roots, flowers and leaves.

The protein localises to the mitochondrion inner membrane. Functionally, essential core component of the TIM22 complex, a complex that mediates the import and insertion of multi-pass transmembrane proteins into the mitochondrial inner membrane. This chain is Mitochondrial import inner membrane translocase subunit TIM22-1 (TIM22-1), found in Arabidopsis thaliana (Mouse-ear cress).